Reading from the N-terminus, the 842-residue chain is Protein P (842 aa).

The terminal protein domain (TP) stretch occupies residues 1–177 (MPLSYQHFRR…FCGSPYSWEQ (177 aa)). Residues 178–345 (ELHHGAFLDG…YCLTHLVNLL (168 aa)) are spacer. Residues 186 to 273 (DGPSRMGEES…AKNIASRSAS (88 aa)) are disordered. The span at 223 to 239 (GPQSQQRPLDGSQQGRS) shows a compositional bias: polar residues. The segment at 346 to 689 (EDWGPCTEHG…YLNLYPVARQ (344 aa)) is polymerase/reverse transcriptase domain (RT). The Reverse transcriptase domain maps to 356-599 (RHHIRIPRTP…YSLNFMGYVI (244 aa)). Positions 428, 550, and 551 each coordinate Mg(2+).

Belongs to the hepadnaviridae P protein family.

The catalysed reaction is DNA(n) + a 2'-deoxyribonucleoside 5'-triphosphate = DNA(n+1) + diphosphate. The enzyme catalyses Endonucleolytic cleavage to 5'-phosphomonoester.. Its activity is regulated as follows. Activated by host HSP70 and HSP40 in vitro to be able to bind the epsilon loop of the pgRNA. Because deletion of the RNase H region renders the protein partly chaperone-independent, the chaperones may be needed indirectly to relieve occlusion of the RNA-binding site by this domain. Inhibited by several reverse-transcriptase inhibitors: Lamivudine, Adefovir and Entecavir. Its function is as follows. Multifunctional enzyme that converts the viral RNA genome into dsDNA in viral cytoplasmic capsids. This enzyme displays a DNA polymerase activity that can copy either DNA or RNA templates, and a ribonuclease H (RNase H) activity that cleaves the RNA strand of RNA-DNA heteroduplexes in a partially processive 3'- to 5'-endonucleasic mode. Neo-synthesized pregenomic RNA (pgRNA) are encapsidated together with the P protein, and reverse-transcribed inside the nucleocapsid. Initiation of reverse-transcription occurs first by binding the epsilon loop on the pgRNA genome, and is initiated by protein priming, thereby the 5'-end of (-)DNA is covalently linked to P protein. Partial (+)DNA is synthesized from the (-)DNA template and generates the relaxed circular DNA (RC-DNA) genome. After budding and infection, the RC-DNA migrates in the nucleus, and is converted into a plasmid-like covalently closed circular DNA (cccDNA). The activity of P protein does not seem to be necessary for cccDNA generation, and is presumably released from (+)DNA by host nuclear DNA repair machinery. This Homo sapiens (Human) protein is Protein P.